The following is a 140-amino-acid chain: Protein PsiE homolog (140 aa).

A run of 4 helical transmembrane segments spans residues 16–36, 57–77, 85–105, and 110–130; these read IVLQ…LSVF, YHLI…VMII, HFPL…LIII, and PLDL…LFIA.

The protein belongs to the PsiE family.

It localises to the cell membrane. The sequence is that of Protein PsiE homolog from Bacillus cereus (strain ATCC 14579 / DSM 31 / CCUG 7414 / JCM 2152 / NBRC 15305 / NCIMB 9373 / NCTC 2599 / NRRL B-3711).